The following is a 393-amino-acid chain: Pinosylvin synthase (393 aa).

57–60 contacts substrate; that stretch reads KFKR. The active site involves Cys-167. Residues Leu-270 and 308–310 contribute to the substrate site; that span reads GGR.

It belongs to the thiolase-like superfamily. Chalcone/stilbene synthases family. Homodimer.

It localises to the cytoplasm. The catalysed reaction is (E)-cinnamoyl-CoA + 3 malonyl-CoA + 3 H(+) = (E)-pinosylvin + 4 CO2 + 4 CoA. The enzyme catalyses 3-phenylpropanoyl-CoA + 3 malonyl-CoA + 3 H(+) = dihydropinosylvin + 4 CO2 + 4 CoA. It participates in phytoalexin biosynthesis; hydropinosylvin biosynthesis. In terms of biological role, catalyzes the production of pinosylvin from cinnamoyl-CoA and malonyl-CoA, and dihydropinosylvin from dihydrocinnamoyl-CoA. This Pinus sylvestris (Scotch pine) protein is Pinosylvin synthase.